The primary structure comprises 310 residues: MIIVTGGAGFIGSNIVKALNDKGITDILVVDNLKDGTKFVNLVDLNIADYMDKEDFLIQIMSGEELGDIEAIFHEGACSSTTEWDGKYMMDNNYQYSKELLHYCLEREIPFLYASSAATYGGRTSDFIESREYEKPLNVYGYSKFLFDEYVRQILPEANSQIVGFRYFNVYGPREGHKGSMASVAFHLNTQLNNGESPKLFEGSENFKRDFVYVGDVAAVNLWFLESGKSGIFNLGTGRAESFQAVADATLAYHKKGSIEYIPFPDKLKGRYQAFTQADLTNLRNAGYDKPFKTVAEGVTEYMAWLNRDS.

NADP(+) is bound by residues 10 to 11 (FI), 31 to 32 (DN), K38, K53, 75 to 79 (EGACS), and N92. The Proton acceptor role is filled by Y140. NADP(+) is bound at residue K144. N169 contacts substrate. NADP(+)-binding residues include V170 and K178. Catalysis depends on K178, which acts as the Proton acceptor. Substrate is bound by residues S180, H187, 201 to 204 (FEGS), R209, and Y272.

It belongs to the NAD(P)-dependent epimerase/dehydratase family. HldD subfamily. In terms of assembly, homopentamer. NADP(+) is required as a cofactor.

It catalyses the reaction ADP-D-glycero-beta-D-manno-heptose = ADP-L-glycero-beta-D-manno-heptose. It participates in nucleotide-sugar biosynthesis; ADP-L-glycero-beta-D-manno-heptose biosynthesis; ADP-L-glycero-beta-D-manno-heptose from D-glycero-beta-D-manno-heptose 7-phosphate: step 4/4. Functionally, catalyzes the interconversion between ADP-D-glycero-beta-D-manno-heptose and ADP-L-glycero-beta-D-manno-heptose via an epimerization at carbon 6 of the heptose. This Salmonella newport (strain SL254) protein is ADP-L-glycero-D-manno-heptose-6-epimerase.